A 156-amino-acid chain; its full sequence is Small ribosomal subunit protein uS7 (156 aa).

It belongs to the universal ribosomal protein uS7 family. As to quaternary structure, part of the 30S ribosomal subunit. Contacts proteins S9 and S11.

Its function is as follows. One of the primary rRNA binding proteins, it binds directly to 16S rRNA where it nucleates assembly of the head domain of the 30S subunit. Is located at the subunit interface close to the decoding center, probably blocks exit of the E-site tRNA. This is Small ribosomal subunit protein uS7 from Paracoccus denitrificans (strain Pd 1222).